The sequence spans 138 residues: Putative pre-16S rRNA nuclease (138 aa).

The protein belongs to the YqgF nuclease family.

Its subcellular location is the cytoplasm. In terms of biological role, could be a nuclease involved in processing of the 5'-end of pre-16S rRNA. The chain is Putative pre-16S rRNA nuclease from Karelsulcia muelleri (strain GWSS) (Sulcia muelleri).